The following is a 324-amino-acid chain: MKMLDKTLPLEELESSLTKTESKAYYLSKLVYRHDKVVNNKAHILQRKLLNLKKQLFYGLTSYQKLCVARHKRRPTTLDYIEYLLDSWIELHGDRRGSDDPAIITGIGRIGRRSVVVLGQQKGRNTKENVLRNFGMSSPGGYRKALRVMEHANKFKLPILTFIDTPGALAGVSAEKSGQAEAIATNLKKMFSFEVPIISTIIGEGGSGGALGICIGNYVMMFENSIYTVATPEACSSILWKDSTKAADAAEALKVRAEDLLTLKIIDEIIPEPFGVAHDYPLLMVRILKNKIRDQLDFFDTFSPSELKHHRYLKFRKLGLYYDC.

The CoA carboxyltransferase C-terminal domain occupies 44-298 (ILQRKLLNLK…KNKIRDQLDF (255 aa)).

Belongs to the AccA family. In terms of assembly, acetyl-CoA carboxylase is a heterohexamer composed of biotin carboxyl carrier protein (accB), biotin carboxylase (accC) and two subunits each of ACCase subunit alpha (accA) and ACCase subunit beta (accD).

Its subcellular location is the plastid. The protein localises to the chloroplast. It carries out the reaction N(6)-carboxybiotinyl-L-lysyl-[protein] + acetyl-CoA = N(6)-biotinyl-L-lysyl-[protein] + malonyl-CoA. Its pathway is lipid metabolism; malonyl-CoA biosynthesis; malonyl-CoA from acetyl-CoA: step 1/1. Functionally, component of the acetyl coenzyme A carboxylase (ACC) complex. First, biotin carboxylase catalyzes the carboxylation of biotin on its carrier protein (BCCP) and then the CO(2) group is transferred by the carboxyltransferase to acetyl-CoA to form malonyl-CoA. The sequence is that of Acetyl-coenzyme A carboxylase carboxyl transferase subunit alpha from Cyanidium caldarium (Red alga).